The primary structure comprises 339 residues: MTVRVAINGFGRIGRNVVRALYESGRRAEITVVAINELADAAGMAHLLKYDTSHGRFAWEVRQERDQLFVGDDAIRVLHERSLQSLPWRELGVDVVLDCTGVYGSREHGEAHIAAGAKKVLFSHPGSNDLDTTVVYGVNQDQLRAEHRIVSNASCTTNCIIPVIKLLDDAYGIESGTVTTIHSAMHDQQVIDAYHPDLRRTRAASQSIIPVDTKLAAGITRFFPQFNDRFEAIAVRVPTINVTAIDLSVTVKKPVKANEVNLLLQKAAQGAFHGIVDYTELPLVSVDFNHDPHSAIVDGTQTRVSGAHLIKTLVWCDNEWGFANRMLDTTLAMATVAFR.

Residues 12–13 (RI) and Arg-81 each bind NAD(+). Residues 154-156 (SCT), Arg-200, 213-214 (TK), and Arg-236 contribute to the substrate site. The Nucleophile role is filled by Cys-155. Residue Asn-318 participates in NAD(+) binding.

Belongs to the glyceraldehyde-3-phosphate dehydrogenase family. Epd subfamily. As to quaternary structure, homotetramer.

The protein resides in the cytoplasm. The catalysed reaction is D-erythrose 4-phosphate + NAD(+) + H2O = 4-phospho-D-erythronate + NADH + 2 H(+). Its pathway is cofactor biosynthesis; pyridoxine 5'-phosphate biosynthesis; pyridoxine 5'-phosphate from D-erythrose 4-phosphate: step 1/5. Functionally, catalyzes the NAD-dependent conversion of D-erythrose 4-phosphate to 4-phosphoerythronate. In Escherichia coli (strain UTI89 / UPEC), this protein is D-erythrose-4-phosphate dehydrogenase.